A 350-amino-acid polypeptide reads, in one-letter code: Methionine import ATP-binding protein MetN 1 (350 aa).

Positions Ile-12–Val-251 constitute an ABC transporter domain. Position 48–55 (Gly-48–Ser-55) interacts with ATP.

Belongs to the ABC transporter superfamily. Methionine importer (TC 3.A.1.24) family. As to quaternary structure, the complex is composed of two ATP-binding proteins (MetN), two transmembrane proteins (MetI) and a solute-binding protein (MetQ).

The protein localises to the cell membrane. The enzyme catalyses L-methionine(out) + ATP + H2O = L-methionine(in) + ADP + phosphate + H(+). The catalysed reaction is D-methionine(out) + ATP + H2O = D-methionine(in) + ADP + phosphate + H(+). In terms of biological role, part of the ABC transporter complex MetNIQ involved in methionine import. Responsible for energy coupling to the transport system. This Oenococcus oeni (strain ATCC BAA-331 / PSU-1) protein is Methionine import ATP-binding protein MetN 1.